The following is a 1059-amino-acid chain: Eukaryotic translation initiation factor 3 subunit A (1059 aa).

A coiled-coil region spans residues 99 to 130 (AAEKVTAAQAKADEVQSSIEATTSNIDDLEAS). Positions 337–521 (LQRAATFVIL…GVLSFDADVF (185 aa)) constitute a PCI domain. Residues 586 to 905 (EALARAKAGA…KAEKEKLAAT (320 aa)) adopt a coiled-coil conformation. A compositionally biased stretch (basic and acidic residues) spans 794-902 (RRDEFEKRRR…ARRKAEKEKL (109 aa)). Positions 794-1059 (RRDEFEKRRR…YVPKWRREGA (266 aa)) are disordered. 4 stretches are compositionally biased toward low complexity: residues 908–927 (AYRPPAAAERTEAAAPPRIA), 942–958 (KAASGETAAPAPAAAEP), 965–988 (AAAPPAERTEAAAPPRLALAGNRP), and 1005–1024 (AAAVPERSAPPLRAAAPQRA).

It belongs to the eIF-3 subunit A family. Component of the eukaryotic translation initiation factor 3 (eIF-3) complex.

The protein resides in the cytoplasm. RNA-binding component of the eukaryotic translation initiation factor 3 (eIF-3) complex, which is involved in protein synthesis of a specialized repertoire of mRNAs and, together with other initiation factors, stimulates binding of mRNA and methionyl-tRNAi to the 40S ribosome. The eIF-3 complex specifically targets and initiates translation of a subset of mRNAs involved in cell proliferation. This is Eukaryotic translation initiation factor 3 subunit A (eif3a) from Neurospora crassa (strain ATCC 24698 / 74-OR23-1A / CBS 708.71 / DSM 1257 / FGSC 987).